The chain runs to 120 residues: Large ribosomal subunit protein uL18 (120 aa).

It belongs to the universal ribosomal protein uL18 family. Part of the 50S ribosomal subunit; part of the 5S rRNA/L5/L18/L25 subcomplex. Contacts the 5S and 23S rRNAs.

Its function is as follows. This is one of the proteins that bind and probably mediate the attachment of the 5S RNA into the large ribosomal subunit, where it forms part of the central protuberance. This chain is Large ribosomal subunit protein uL18, found in Bartonella bacilliformis (strain ATCC 35685 / KC583 / Herrer 020/F12,63).